The chain runs to 541 residues: Membrane protein insertase YidC (541 aa).

Transmembrane regions (helical) follow at residues 6–26, 356–376, 430–450, 463–483, and 498–518; these read FFLI…WEIT, IIHS…LAFY, LPIL…LEMV, LSAP…MFIQ, and IMMA…SGLV.

Belongs to the OXA1/ALB3/YidC family. Type 1 subfamily. Interacts with the Sec translocase complex via SecD. Specifically interacts with transmembrane segments of nascent integral membrane proteins during membrane integration.

Its subcellular location is the cell inner membrane. Required for the insertion and/or proper folding and/or complex formation of integral membrane proteins into the membrane. Involved in integration of membrane proteins that insert both dependently and independently of the Sec translocase complex, as well as at least some lipoproteins. Aids folding of multispanning membrane proteins. The sequence is that of Membrane protein insertase YidC from Vesicomyosocius okutanii subsp. Calyptogena okutanii (strain HA).